Reading from the N-terminus, the 209-residue chain is Uracil phosphoribosyltransferase (209 aa).

Residues Arg-79, Arg-104, and 131 to 139 each bind 5-phospho-alpha-D-ribose 1-diphosphate; that span reads DPMLATGGT. Uracil-binding positions include Ile-194 and 199 to 201; that span reads GDA. Asp-200 serves as a coordination point for 5-phospho-alpha-D-ribose 1-diphosphate.

The protein belongs to the UPRTase family. The cofactor is Mg(2+).

The enzyme catalyses UMP + diphosphate = 5-phospho-alpha-D-ribose 1-diphosphate + uracil. It participates in pyrimidine metabolism; UMP biosynthesis via salvage pathway; UMP from uracil: step 1/1. With respect to regulation, allosterically activated by GTP. Catalyzes the conversion of uracil and 5-phospho-alpha-D-ribose 1-diphosphate (PRPP) to UMP and diphosphate. The chain is Uracil phosphoribosyltransferase from Pseudoalteromonas translucida (strain TAC 125).